The sequence spans 168 residues: Vasopressin-neurophysin 2-copeptin (168 aa).

Residues 1–23 form the signal peptide; sequence MLARMLNTTLSACFLSLLAFSSA. Residues Cys24 and Cys29 are joined by a disulfide bond. Gly32 bears the Glycine amide mark. 7 cysteine pairs are disulfide-bonded: Cys45–Cys89, Cys48–Cys62, Cys56–Cys79, Cys63–Cys69, Cys96–Cys108, Cys102–Cys120, and Cys109–Cys114. An N-linked (GlcNAc...) asparagine glycan is attached at Asn135.

The protein belongs to the vasopressin/oxytocin family. Interacts with vasopressin receptors V1bR/AVPR1B (Ki=85 pM), V1aR/AVPR1A (Ki=0.6 nM) and V2R/AVPR2 (Ki=4.9 nM). Interacts with oxytocin receptor (OXTR) (Ki=110 nM).

It localises to the secreted. Neurophysin 2 specifically binds vasopressin. Functionally, vasopressin has a direct antidiuretic action on the kidney, it also causes vasoconstriction of the peripheral vessels. Acts by binding to vasopressin receptors (V1bR/AVPR1B, V1aR/AVPR1A, and V2R/AVPR2). The sequence is that of Vasopressin-neurophysin 2-copeptin (Avp) from Mus musculus (Mouse).